The sequence spans 349 residues: C-X-C chemokine receptor type 4 (349 aa).

The tract at residues 1 to 18 (MEIYTSDNYSEEVGSGDY) is important for chemokine binding and signaling. The segment at 1-23 (MEIYTSDNYSEEVGSGDYDSNKE) is disordered. The Extracellular segment spans residues 1–35 (MEIYTSDNYSEEVGSGDYDSNKEPCFRDENENFNR). Asparagine 8 carries N-linked (GlcNAc...) asparagine glycosylation. A Sulfotyrosine modification is found at tyrosine 9. Residue serine 15 is glycosylated (O-linked (Xyl...) (chondroitin sulfate) serine). Tyrosine 18 carries the sulfotyrosine modification. 2 disulfides stabilise this stretch: cysteine 25–cysteine 271 and cysteine 106–cysteine 183. The chain crosses the membrane as a helical span at residues 36-60 (IFLPTIYFIIFLTGIVGNGLVILVM). Residues 61-74 (GYQKKLRSMTDKYR) lie on the Cytoplasmic side of the membrane. The chain crosses the membrane as a helical span at residues 75–96 (LHLSVADLLFVITLPFWAVDAM). The interval 91–94 (WAVD) is chemokine binding. Residues 97 to 107 (ADWYFGKFLCK) are Extracellular-facing. A helical membrane pass occupies residues 108–127 (AVHIIYTVNLYSSVLILAFI). The tract at residues 110–114 (HIIYT) is chemokine binding. The Cytoplasmic portion of the chain corresponds to 128-151 (SLDRYLAIVHATNSQRPRKLLAEK). Positions 130–132 (DRY) match the Important for signaling motif. Positions 132 to 144 (YLAIVHATNSQRP) are involved in dimerization; when bound to chemokine. Residues 152-171 (AVYVGVWIPALLLTIPDIIF) traverse the membrane as a helical segment. The Extracellular segment spans residues 172 to 192 (ADVSQGDGRYICDRLYPDSLW). The interval 183–187 (CDRLY) is chemokine binding, important for signaling. An involved in dimerization region spans residues 188-207 (PDSLWMVVFQFQHIMVGLIL). Residues 193–213 (MVVFQFQHIMVGLILPGIVIL) traverse the membrane as a helical segment. Residues 214–238 (SCYCIIISKLSHSKGHQKRKALKTT) lie on the Cytoplasmic side of the membrane. The helical transmembrane segment at 239–258 (VILILAFFACWLPYYVGISI) threads the bilayer. Topologically, residues 259–279 (DSFILLEVIKQGCEFESVVHK) are extracellular. Residues 263–265 (LLE) are involved in dimerization. Residues 280–299 (WISITEALAFFHCCLNPILY) form a helical membrane-spanning segment. Residues 300–349 (AFLGAKFKSSAQHALNSMSRGSSLKILSKGKRGGHSSVSTESESSSFHSS) lie on the Cytoplasmic side of the membrane. A phosphoserine mark is found at serine 316 and serine 318. 2 positions are modified to phosphoserine; by PKC and GRK6: serine 321 and serine 322. The disordered stretch occupies residues 325-349 (ILSKGKRGGHSSVSTESESSSFHSS). Serine 327 carries the phosphoserine; by GRK6 modification. Lysine 328 participates in a covalent cross-link: Glycyl lysine isopeptide (Lys-Gly) (interchain with G-Cter in ubiquitin). A compositionally biased stretch (low complexity) spans 334-349 (HSSVSTESESSSFHSS). Serine 336 is subject to Phosphoserine; by GRK6. Phosphoserine occurs at positions 345 and 348.

The protein belongs to the G-protein coupled receptor 1 family. As to quaternary structure, monomer. Can form homodimers. Interacts with CD164. Interacts with ARRB2; the interaction is dependent on the C-terminal phosphorylation of CXCR4 and allows activation of MAPK1 and MAPK3. Interacts with ARR3; the interaction is dependent on the C-terminal phosphorylation of CXCR4 and modulates calcium mobilization. Interacts with RNF113A; the interaction, enhanced by CXCL12, promotes CXCR4 ubiquitination and subsequent degradation. Interacts (via the cytoplasmic C-terminal) with ITCH (via the WW domains I and II); the interaction, enhanced by CXCL12, promotes CXCR4 ubiquitination and leads to its degradation. Interacts with extracellular ubiquitin. Interacts with DBN1; this interaction is enhanced by antigenic stimulation. Following LPS binding, may form a complex with GDF5, HSP90AA1 and HSPA8. Post-translationally, phosphorylated on agonist stimulation. Rapidly phosphorylated on serine and threonine residues in the C-terminal. Phosphorylation at Ser-321 and Ser-322 leads to recruitment of ITCH, ubiquitination and protein degradation. In terms of processing, ubiquitinated after ligand binding, leading to its degradation. Ubiquitinated by ITCH at the cell membrane on agonist stimulation. The ubiquitin-dependent mechanism, endosomal sorting complex required for transport (ESCRT), then targets CXCR4 for lysosomal degradation. This process is dependent also on prior Ser-/Thr-phosphorylation in the C-terminal of CXCR4. Also binding of ARRB1 to STAM negatively regulates CXCR4 sorting to lysosomes though modulating ubiquitination of SFR5S. Sulfation is required for efficient binding of CXCL12/SDF-1alpha and promotes its dimerization. Post-translationally, O- and N-glycosylated. N-glycosylation can mask coreceptor function. The O-glycosylation chondroitin sulfate attachment does not affect interaction with CXCL12/SDF-1alpha nor its coreceptor activity.

The protein localises to the cell membrane. The protein resides in the cell junction. Its subcellular location is the early endosome. It localises to the late endosome. It is found in the lysosome. Functionally, receptor for the C-X-C chemokine CXCL12/SDF-1 that transduces a signal by increasing intracellular calcium ion levels and enhancing MAPK1/MAPK3 activation. Involved in the AKT signaling cascade. Plays a role in regulation of cell migration, e.g. during wound healing. Acts as a receptor for extracellular ubiquitin; leading to enhanced intracellular calcium ions and reduced cellular cAMP levels. Binds bacterial lipopolysaccharide (LPS) et mediates LPS-induced inflammatory response, including TNF secretion by monocytes. Involved in hematopoiesis and in cardiac ventricular septum formation. Also plays an essential role in vascularization of the gastrointestinal tract, probably by regulating vascular branching and/or remodeling processes in endothelial cells. Involved in cerebellar development. In the CNS, could mediate hippocampal-neuron survival. The sequence is that of C-X-C chemokine receptor type 4 (Cxcr4) from Rattus norvegicus (Rat).